Here is a 732-residue protein sequence, read N- to C-terminus: Protein kinase YpkA (732 aa).

The Protein kinase domain occupies 136–408 (VAETDKFAEG…SNEARLHEFL (273 aa)). Residues 142 to 150 (FAEGESHIS) and lysine 163 each bind ATP. Aspartate 270 serves as the catalytic Proton acceptor.

It belongs to the protein kinase superfamily. Ser/Thr protein kinase family.

It is found in the secreted. It catalyses the reaction L-seryl-[protein] + ATP = O-phospho-L-seryl-[protein] + ADP + H(+). It carries out the reaction L-threonyl-[protein] + ATP = O-phospho-L-threonyl-[protein] + ADP + H(+). Its function is as follows. Acts as a virulence determinant. This chain is Protein kinase YpkA (ypkA), found in Yersinia pseudotuberculosis serotype I (strain IP32953).